A 158-amino-acid chain; its full sequence is Phosphopantetheine adenylyltransferase (158 aa).

Threonine 10 lines the substrate pocket. Residues 10 to 11 (TF) and histidine 18 each bind ATP. Residues lysine 42, leucine 74, and arginine 88 each contribute to the substrate site. Residues 89-91 (GIR), glutamate 99, and 124-130 (WRYLSST) each bind ATP.

This sequence belongs to the bacterial CoaD family. As to quaternary structure, homohexamer. Mg(2+) serves as cofactor.

Its subcellular location is the cytoplasm. The enzyme catalyses (R)-4'-phosphopantetheine + ATP + H(+) = 3'-dephospho-CoA + diphosphate. Its pathway is cofactor biosynthesis; coenzyme A biosynthesis; CoA from (R)-pantothenate: step 4/5. Functionally, reversibly transfers an adenylyl group from ATP to 4'-phosphopantetheine, yielding dephospho-CoA (dPCoA) and pyrophosphate. The chain is Phosphopantetheine adenylyltransferase from Actinobacillus pleuropneumoniae serotype 3 (strain JL03).